The sequence spans 425 residues: Serine--tRNA ligase (425 aa).

229-231 (TAE) lines the L-serine pocket. 260–262 (RSE) serves as a coordination point for ATP. Glutamate 283 serves as a coordination point for L-serine. 347–350 (EISS) is an ATP binding site. L-serine is bound at residue serine 384.

Belongs to the class-II aminoacyl-tRNA synthetase family. Type-1 seryl-tRNA synthetase subfamily. Homodimer. The tRNA molecule binds across the dimer.

The protein localises to the cytoplasm. The enzyme catalyses tRNA(Ser) + L-serine + ATP = L-seryl-tRNA(Ser) + AMP + diphosphate + H(+). It catalyses the reaction tRNA(Sec) + L-serine + ATP = L-seryl-tRNA(Sec) + AMP + diphosphate + H(+). It functions in the pathway aminoacyl-tRNA biosynthesis; selenocysteinyl-tRNA(Sec) biosynthesis; L-seryl-tRNA(Sec) from L-serine and tRNA(Sec): step 1/1. Its function is as follows. Catalyzes the attachment of serine to tRNA(Ser). Is also able to aminoacylate tRNA(Sec) with serine, to form the misacylated tRNA L-seryl-tRNA(Sec), which will be further converted into selenocysteinyl-tRNA(Sec). The polypeptide is Serine--tRNA ligase (Rhizorhabdus wittichii (strain DSM 6014 / CCUG 31198 / JCM 15750 / NBRC 105917 / EY 4224 / RW1) (Sphingomonas wittichii)).